A 297-amino-acid polypeptide reads, in one-letter code: Alpha-tubulin N-acetyltransferase 1 (297 aa).

The N-acetyltransferase domain maps to 1 to 186; it reads MEFDFDVHKI…NNFVVFDGFF (186 aa). Acetyl-CoA-binding positions include 120–133 and 156–165; these read FYIH…GFGK and SEKFLSFLRK. The disordered stretch occupies residues 269–297; that stretch reads LHRTANSEQEDHSQRRRTSSLNRPQSIHH. Positions 287–297 are enriched in polar residues; the sequence is SSLNRPQSIHH.

Belongs to the acetyltransferase ATAT1 family.

It is found in the cytoplasm. Its subcellular location is the membrane. It localises to the clathrin-coated pit. The protein localises to the cell junction. The protein resides in the focal adhesion. It is found in the cell projection. Its subcellular location is the axon. It localises to the cytoskeleton. The protein localises to the spindle. The enzyme catalyses L-lysyl-[alpha-tubulin] + acetyl-CoA = N(6)-acetyl-L-lysyl-[alpha-tubulin] + CoA + H(+). Its function is as follows. Specifically acetylates 'Lys-40' in alpha-tubulin on the lumenal side of microtubules. Promotes microtubule destabilization and accelerates microtubule dynamics; this activity may be independent of acetylation activity. Acetylates alpha-tubulin with a slow enzymatic rate, due to a catalytic site that is not optimized for acetyl transfer. Enters the microtubule through each end and diffuses quickly throughout the lumen of microtubules. Acetylates only long/old microtubules because of its slow acetylation rate since it does not have time to act on dynamically unstable microtubules before the enzyme is released. May be involved in neuron development. The chain is Alpha-tubulin N-acetyltransferase 1 from Xenopus tropicalis (Western clawed frog).